The following is a 360-amino-acid chain: Phospho-N-acetylmuramoyl-pentapeptide-transferase (360 aa).

The next 10 helical transmembrane spans lie at 27–47 (ILGV…VIVL), 73–93 (TMGG…WGDL), 97–117 (YVWV…VDDY), 145–165 (AFYL…VPLF), 168–188 (VAIP…VGTS), 199–219 (GLAI…AYLT), 236–256 (SGEL…FLWF), 263–283 (IFMG…IAVI), 288–308 (LVLF…ILQV), and 337–357 (KVIV…FATL).

Belongs to the glycosyltransferase 4 family. MraY subfamily. It depends on Mg(2+) as a cofactor.

Its subcellular location is the cell inner membrane. The enzyme catalyses UDP-N-acetyl-alpha-D-muramoyl-L-alanyl-gamma-D-glutamyl-meso-2,6-diaminopimeloyl-D-alanyl-D-alanine + di-trans,octa-cis-undecaprenyl phosphate = di-trans,octa-cis-undecaprenyl diphospho-N-acetyl-alpha-D-muramoyl-L-alanyl-D-glutamyl-meso-2,6-diaminopimeloyl-D-alanyl-D-alanine + UMP. The protein operates within cell wall biogenesis; peptidoglycan biosynthesis. Its function is as follows. Catalyzes the initial step of the lipid cycle reactions in the biosynthesis of the cell wall peptidoglycan: transfers peptidoglycan precursor phospho-MurNAc-pentapeptide from UDP-MurNAc-pentapeptide onto the lipid carrier undecaprenyl phosphate, yielding undecaprenyl-pyrophosphoryl-MurNAc-pentapeptide, known as lipid I. This Marinomonas sp. (strain MWYL1) protein is Phospho-N-acetylmuramoyl-pentapeptide-transferase.